The primary structure comprises 252 residues: Phosphate import ATP-binding protein PstB (252 aa).

Residues 6 to 247 (MSIRDLNFYY…PAQKATEDYI (242 aa)) form the ABC transporter domain. 38–45 (GPSGCGKS) is an ATP binding site.

Belongs to the ABC transporter superfamily. Phosphate importer (TC 3.A.1.7) family. The complex is composed of two ATP-binding proteins (PstB), two transmembrane proteins (PstC and PstA) and a solute-binding protein (PstS).

The protein resides in the cell inner membrane. The catalysed reaction is phosphate(out) + ATP + H2O = ADP + 2 phosphate(in) + H(+). Part of the ABC transporter complex PstSACB involved in phosphate import. Responsible for energy coupling to the transport system. The chain is Phosphate import ATP-binding protein PstB from Psychrobacter cryohalolentis (strain ATCC BAA-1226 / DSM 17306 / VKM B-2378 / K5).